A 401-amino-acid polypeptide reads, in one-letter code: MQVSFACTEQTLRSRTSEDRLCPSRPSGGQNGVSMAQTKQRTPPMGAKNHNQVLPLLSHILRESTVKSTGMKYRNLGKSGLRVSCLGLGTWVTFGSQISDEVAENLMTVAYEHGVNLFDTAEVYAAGRAERTLGKILKKKEWRRSSYVVTTKIYWGGQAETERGLSRKHIIEGLRGSLERLQLDYVDIVFANRMDPNSPMEEIVRAMTFVINQGMAMYWGTSRWSAMEIMEAYSVARQFNLIPPVCEQAEYHLFQREKVETQLPELYHKIGVGSMTWSPLACGLITGKYTDTVPEKSRASFKGYHWLKEKAISQEGKKQHSKVKELHPIADRLNCTVTQLAIAWCLRSEGVSSVLLGVSNIEQLLENLGAIQVLPHLTPQLVTEIDQILGNKPNLKKDSRA.

Polar residues-rich tracts occupy residues 1-14 and 32-41; these read MQVSFACTEQTLRS and GVSMAQTKQR. The disordered stretch occupies residues 1-49; that stretch reads MQVSFACTEQTLRSRTSEDRLCPSRPSGGQNGVSMAQTKQRTPPMGAKN. NADP(+) is bound by residues Thr90, Trp91, Gln97, and Asp119. Tyr124 acts as the Proton donor/acceptor in catalysis. Residues Asn192, Ser222, Arg223, Gln248, Trp277, Ser278, Pro279, Leu280, Ala281, Cys282, Lys288, Arg298, Gly357, Ser359, Gln363, Glu366, and Asn367 each coordinate NADP(+).

It belongs to the shaker potassium channel beta subunit family. In terms of assembly, forms heteromultimeric complex with alpha subunits. Identified in potassium channel complexes containing KCNA1 and KCNA2.

The protein resides in the cytoplasm. Regulatory subunit of the voltage-gated potassium (Kv) channels composed of pore-forming and potassium-conducting alpha subunits and of regulatory beta subunit. The beta-3/KCNAB3 subunit may mediate closure of potassium channels. Increases and accelerates inactivation of Kv1.1/KCNA1 and Kv2.2/KCNA2 subunit-containing channels. May display nicotinamide adenine dinucleotide phosphate (NADPH)-dependent aldoketoreductase activity. The binding of oxidized and reduced NADP(H) cofactors may be required for the regulation of potassium channel activity. In Xenopus laevis (African clawed frog), this protein is Voltage-gated potassium channel subunit beta-3 (kcnab3).